The sequence spans 627 residues: Pescadillo homolog (627 aa).

Positions 321-414 (RLRTLFKGLK…QLLPTNKYFI (94 aa)) constitute a BRCT domain. 3 disordered regions span residues 436-471 (PEEK…AVDQ), 489-562 (YKKY…LQAR), and 596-627 (FEAG…KLGK). Phosphoserine occurs at positions 453 and 457. Acidic residues-rich tracts occupy residues 453–471 (SDDD…AVDQ) and 498–521 (VNED…EELD). Basic and acidic residues predominate over residues 522–533 (EQAKRLKEEKQK). Basic residues predominate over residues 540-549 (KVHKVNKRQL). 2 stretches are compositionally biased toward basic and acidic residues: residues 550–559 (HKAEVDEHRL) and 596–605 (FEAGEKEARK). Positions 616-627 (AAAAAKASKLGK) are enriched in low complexity.

It belongs to the pescadillo family.

The protein resides in the nucleus. Its subcellular location is the nucleolus. The protein localises to the nucleoplasm. Required for maturation of ribosomal RNAs and formation of the large ribosomal subunit. The sequence is that of Pescadillo homolog from Drosophila ananassae (Fruit fly).